The primary structure comprises 83 residues: Mu-theraphotoxin-Hhn2j 1 (83 aa).

The signal sequence occupies residues 1–21 (MKASMFLALAGLVLLFVVGYA). A propeptide spanning residues 22 to 48 (SESEEKEFPIELLSKIFAVDVFKGEER) is cleaved from the precursor. Intrachain disulfides connect Cys-50/Cys-65, Cys-57/Cys-70, and Cys-64/Cys-77. Position 81 is a leucine amide (Leu-81).

Belongs to the neurotoxin 10 (Hwtx-1) family. 15 (Hntx-3) subfamily. Monomer. As to expression, expressed by the venom gland.

It localises to the secreted. Lethal neurotoxin. Selectively blocks tetrodotoxin-sensitive voltage-gated sodium channels (Nav). Does not affect tetrodotoxin-resistant voltage-gated sodium channels or calcium channels. In Cyriopagopus hainanus (Chinese bird spider), this protein is Mu-theraphotoxin-Hhn2j 1.